Consider the following 177-residue polypeptide: Endoribonuclease YbeY (177 aa).

Positions 118, 122, and 128 each coordinate Zn(2+).

It belongs to the endoribonuclease YbeY family. It depends on Zn(2+) as a cofactor.

It localises to the cytoplasm. Single strand-specific metallo-endoribonuclease involved in late-stage 70S ribosome quality control and in maturation of the 3' terminus of the 16S rRNA. This Mycolicibacterium paratuberculosis (strain ATCC BAA-968 / K-10) (Mycobacterium paratuberculosis) protein is Endoribonuclease YbeY.